A 509-amino-acid polypeptide reads, in one-letter code: Protein Jade-1 (509 aa).

The disordered stretch occupies residues 1 to 45; that stretch reads MKRGRLPSSSEDSDDNGSLSTTWSQNSRSQHRRSSCSRPEDRKPS. Positions 60-80 are interaction with KAT7/HBO1 and histones; it reads DSYQLNPDEYYVLADPWRQEW. Residues 80-188 form an interaction with histones region; it reads WEKGVQVPVS…EQRCYDNMNH (109 aa). Serine 89 is subject to Phosphoserine. Threonine 92 bears the Phosphothreonine mark. Lysine 114 participates in a covalent cross-link: Glycyl lysine isopeptide (Lys-Gly) (interchain with G-Cter in SUMO2). The PHD-type 1 zinc-finger motif lies at 203-253; sequence YVVCDVCQSPDGEDGNEMVFCDKCNICVHQACYGILKVPEGSWLCRTCALG. The C2HC pre-PHD-type zinc finger occupies 255-289; it reads QPKCLLCPKKGGAMKPTRSGTKWVHVSCALWIPEV. The PHD-type 2 zinc-finger motif lies at 313 to 369; that stretch reads LVCSLCNEKFGASIQCSVKNCRTAFHVTCAFDRGLEMKTILAENDEVKFKSYCPKHS. The interval 373 to 399 is disordered; sequence KAEEGLGEGTAQENGAPECSPRDPLEP.

It belongs to the JADE family. Component of the HBO1 complex composed at least of ING4 or ING5, KAT7/HBO1, MEAF6, and one of JADE1, JADE2 and JADE3. Interacts with NPHP4.

It localises to the nucleus. The protein resides in the chromosome. Its subcellular location is the cytoplasm. It is found in the cytoskeleton. The protein localises to the cilium basal body. Scaffold subunit of some HBO1 complexes, which have a histone H4 acetyltransferase activity. Plays a key role in HBO1 complex by directing KAT7/HBO1 specificity towards histone H4 acetylation (H4K5ac, H4K8ac and H4K12ac), regulating DNA replication initiation, regulating DNA replication initiation. May also promote acetylation of nucleosomal histone H4 by KAT5. Promotes apoptosis. May act as a renal tumor suppressor. Negatively regulates canonical Wnt signaling; at least in part, cooperates with NPHP4 in this function. This chain is Protein Jade-1 (JADE1), found in Bos taurus (Bovine).